The sequence spans 445 residues: Phosphoglucosamine mutase 1 (445 aa).

The Phosphoserine intermediate role is filled by serine 102. Mg(2+) is bound by residues serine 102, aspartate 241, aspartate 243, and aspartate 245. Position 102 is a phosphoserine (serine 102).

It belongs to the phosphohexose mutase family. The cofactor is Mg(2+). Activated by phosphorylation.

The catalysed reaction is alpha-D-glucosamine 1-phosphate = D-glucosamine 6-phosphate. In terms of biological role, catalyzes the conversion of glucosamine-6-phosphate to glucosamine-1-phosphate. This Shewanella frigidimarina (strain NCIMB 400) protein is Phosphoglucosamine mutase 1.